The chain runs to 470 residues: Phosphoribosylamine--glycine ligase (470 aa).

Residues 115 to 354 (KDFLKRIGVP…MAEISMAVVE (240 aa)) enclose the ATP-grasp domain. 142–203 (REKFNNGIVV…EERLRGIEVA (62 aa)) contributes to the ATP binding site. Residues glutamate 324 and asparagine 326 each coordinate Mg(2+).

It belongs to the GARS family. The cofactor is Mg(2+). It depends on Mn(2+) as a cofactor.

It catalyses the reaction 5-phospho-beta-D-ribosylamine + glycine + ATP = N(1)-(5-phospho-beta-D-ribosyl)glycinamide + ADP + phosphate + H(+). It participates in purine metabolism; IMP biosynthesis via de novo pathway; N(1)-(5-phospho-D-ribosyl)glycinamide from 5-phospho-alpha-D-ribose 1-diphosphate: step 2/2. This is Phosphoribosylamine--glycine ligase (purD) from Archaeoglobus fulgidus (strain ATCC 49558 / DSM 4304 / JCM 9628 / NBRC 100126 / VC-16).